A 430-amino-acid chain; its full sequence is Phosphomethylpyrimidine synthase 2 (430 aa).

Substrate-binding positions include Asn-66, Met-95, Tyr-124, His-164, 186-188, 227-230, and Glu-266; these read SRG and DGFR. His-270 provides a ligand contact to Zn(2+). Substrate is bound at residue Tyr-293. His-334 is a Zn(2+) binding site. Residues Cys-411, Cys-414, and Cys-418 each coordinate [4Fe-4S] cluster.

Belongs to the ThiC family. As to quaternary structure, homodimer. [4Fe-4S] cluster serves as cofactor.

The enzyme catalyses 5-amino-1-(5-phospho-beta-D-ribosyl)imidazole + S-adenosyl-L-methionine = 4-amino-2-methyl-5-(phosphooxymethyl)pyrimidine + CO + 5'-deoxyadenosine + formate + L-methionine + 3 H(+). It participates in cofactor biosynthesis; thiamine diphosphate biosynthesis. Its function is as follows. Catalyzes the synthesis of the hydroxymethylpyrimidine phosphate (HMP-P) moiety of thiamine from aminoimidazole ribotide (AIR) in a radical S-adenosyl-L-methionine (SAM)-dependent reaction. The chain is Phosphomethylpyrimidine synthase 2 from Syntrophotalea carbinolica (strain DSM 2380 / NBRC 103641 / GraBd1) (Pelobacter carbinolicus).